Reading from the N-terminus, the 89-residue chain is MSRKCPLTGKRPRRGNSYTIRGIAKKKKGIGLKVTGKTPRRFFPNMITKRLWSTEENKFLKLKISTSALRLIDKLGLEKVIARAKSKGL.

This sequence belongs to the bacterial ribosomal protein bL28 family.

The chain is Large ribosomal subunit protein bL28 from Chlamydia caviae (strain ATCC VR-813 / DSM 19441 / 03DC25 / GPIC) (Chlamydophila caviae).